Reading from the N-terminus, the 125-residue chain is UPF0225 protein Cgl1438/cg1626 (125 aa).

The protein belongs to the UPF0225 family.

The sequence is that of UPF0225 protein Cgl1438/cg1626 from Corynebacterium glutamicum (strain ATCC 13032 / DSM 20300 / JCM 1318 / BCRC 11384 / CCUG 27702 / LMG 3730 / NBRC 12168 / NCIMB 10025 / NRRL B-2784 / 534).